A 372-amino-acid polypeptide reads, in one-letter code: Cyclin-dependent kinase 9 (372 aa).

The region spanning 19–315 (YEKLAKIGQG…SDDALNHDFF (297 aa)) is the Protein kinase domain. 25-33 (IGQGTFGEV) lines the ATP pocket. Lys44 carries the N6-acetyllysine; by EP300/CBP, PCAF/KAT2B and GCN5/KAT2A modification. Residues Lys48 and 104–106 (DFC) contribute to the ATP site. Position 48 is an N6-acetyllysine; by PCAF/KAT2B and GCN5/KAT2A (Lys48). Asp149 serves as the catalytic Proton acceptor. Positions 166-191 (ADFGLARAFSLAKNSQPNRYTNRVVT) are T-loop. Residue Asp167 coordinates ATP. Ser175 bears the Phosphoserine mark. Thr186 carries the phosphothreonine; by CaMK1D modification. Positions 343–372 (RRKGSQITQQSTNQSRNPATTNQTEFERVF) are disordered. Ser347 is modified (phosphoserine; by CDK9 and PKA). A compositionally biased stretch (polar residues) spans 347–366 (SQITQQSTNQSRNPATTNQT). Residue Thr350 is modified to Phosphothreonine; by CDK9. Ser353 carries the post-translational modification Phosphoserine; by CDK9. Thr354 is subject to Phosphothreonine; by CDK9. The residue at position 357 (Ser357) is a Phosphoserine; by CDK9. Phosphothreonine; by CDK9 is present on residues Thr362 and Thr363.

The protein belongs to the protein kinase superfamily. CMGC Ser/Thr protein kinase family. CDC2/CDKX subfamily. As to quaternary structure, component of the super elongation complex (SEC), at least composed of EAF1, EAF2, CDK9, MLLT3/AF9, AFF (AFF1 or AFF4), the P-TEFb complex and ELL (ELL, ELL2 or ELL3). Associates with CCNT1/cyclin-T1, CCNT2/cyclin-T2 (isoform A and isoform B) or CCNK/cyclin-K to form active P-TEFb. P-TEFb forms a complex with AFF4/AF5Q31 and is part of the super elongation complex (SEC). Component of a complex which is composed of at least 5 members: HTATSF1/Tat-SF1, P-TEFb complex, RNA pol II, SUPT5H, and NCL/nucleolin. Associates with UBR5 and forms a transcription regulatory complex composed of CDK9, RNAP II, UBR5 and TFIIS/TCEA1 that can stimulate target gene transcription (e.g. gamma fibrinogen/FGG) by recruiting their promoters. Component of the 7SK snRNP inactive complex which is composed of at least 8 members: P-TEFb (composed of CDK9 and CCNT1/cyclin-T1), HEXIM1, HEXIM2, LARP7, BCDIN3, SART3 proteins and 7SK and U6 snRNAs. This inactive 7SK snRNP complex can also interact with NCOR1 and HDAC3, probably to regulate CDK9 acetylation. Release of P-TEFb from P-TEFb/7SK snRNP complex requires both PP2B to transduce calcium Ca(2+) signaling in response to stimuli (e.g. UV or hexamethylene bisacetamide (HMBA)), and PPP1CA to dephosphorylate Thr-186. This released P-TEFb remains inactive in the pre-initiation complex with BRD4 until new Thr-186 phosphorylation occurs after the synthesis of a short RNA. Interacts with BRD4; to target chromatin binding. Interacts with JMJD6. Interacts with activated nuclear STAT3 and RELA/p65. Binds to AR and MYOD1. Forms a complex composed of CDK9, CCNT1/cyclin-T1, EP300 and GATA4 that stimulates hypertrophy in cardiomyocytes. The large PER complex involved in the repression of transcriptional termination is composed of at least PER2, CDK9, DDX5, DHX9, NCBP1 and POLR2A (active). Interacts with HSF1. Interacts with TBX21. Interacts with WDR43. Interacts with ZMYND8; the association appears to occur between homodimeric ZMYND8 and the activated form of the P-TEFb complex. Autophosphorylation at Thr-186, Ser-347, Thr-350, Ser-353, Thr-354 and Ser-357 triggers kinase activity by promoting cyclin and substrate binding upon conformational changes. Thr-186 phosphorylation requires the calcium Ca(2+) signaling pathway, including CaMK1D and calmodulin. This inhibition is relieved by Thr-29 dephosphorylation. Phosphorylation at Ser-175 inhibits kinase activity. Can be phosphorylated on either Thr-362 or Thr-363 but not on both simultaneously. In terms of processing, dephosphorylation of Thr-186 by PPM1A and PPM1B blocks CDK9 activity and may lead to CDK9 proteasomal degradation. However, PPP1CA-mediated Thr-186 dephosphorylation is required to release P-TEFb from its inactive P-TEFb/7SK snRNP complex. Dephosphorylated at Ser-347 by the PNUTS-PP1 complex during RNA polymerase II transcription pause-release. Dephosphorylation of C-terminus Thr and Ser residues by protein phosphatase-1 (PP1) triggers CDK9 activity. Post-translationally, N6-acetylation of Lys-44 promotes kinase activity, whereas acetylation of both Lys-44 and Lys-48 mediated by PCAF/KAT2B and GCN5/KAT2A reduces kinase activity. The acetylated form associates with PML bodies in the nuclear matrix and with the transcriptionally silent HIV-1 genome; deacetylated upon transcription stimulation. Deacetylated by SIRT7, promoting the kinase activity and subsequent 'Ser-2' phosphorylation of the C-terminal domain (CTD) of RNA polymerase II. Polyubiquitinated and thus activated by UBR5. This ubiquitination is promoted by TFIIS/TCEA1 and favors 'Ser-2' phosphorylation of RPB1/POLR2A CTD. As to expression, expressed at high levels in brain and kidney.

The protein resides in the nucleus. It is found in the cytoplasm. The protein localises to the PML body. The catalysed reaction is L-seryl-[protein] + ATP = O-phospho-L-seryl-[protein] + ADP + H(+). It catalyses the reaction L-threonyl-[protein] + ATP = O-phospho-L-threonyl-[protein] + ADP + H(+). It carries out the reaction [DNA-directed RNA polymerase] + ATP = phospho-[DNA-directed RNA polymerase] + ADP + H(+). With respect to regulation, activation by Thr-186 phosphorylation is calcium Ca(2+) signaling pathway-dependent; actively inactivated by dephosphorylation mediated by PPP1CA, PPM1A and PPM1B. Reversibly repressed by acetylation at Lys-44 and Lys-48. Functionally, protein kinase involved in the regulation of transcription. Member of the cyclin-dependent kinase pair (CDK9/cyclin-T) complex, also called positive transcription elongation factor b (P-TEFb), which facilitates the transition from abortive to productive elongation by phosphorylating the CTD (C-terminal domain) of the large subunit of RNA polymerase II (RNAP II) POLR2A, SUPT5H and RDBP. This complex is inactive when in the 7SK snRNP complex form. Phosphorylates EP300, MYOD1, RPB1/POLR2A and AR and the negative elongation factors DSIF and NELFE. Regulates cytokine inducible transcription networks by facilitating promoter recognition of target transcription factors (e.g. TNF-inducible RELA/p65 activation and IL-6-inducible STAT3 signaling). Promotes RNA synthesis in genetic programs for cell growth, differentiation and viral pathogenesis. P-TEFb is also involved in cotranscriptional histone modification, mRNA processing and mRNA export. Modulates a complex network of chromatin modifications including histone H2B monoubiquitination (H2Bub1), H3 lysine 4 trimethylation (H3K4me3) and H3K36me3; integrates phosphorylation during transcription with chromatin modifications to control co-transcriptional histone mRNA processing. The CDK9/cyclin-K complex has also a kinase activity towards CTD of RNAP II and can substitute for CDK9/cyclin-T P-TEFb in vitro. Replication stress response protein; the CDK9/cyclin-K complex is required for genome integrity maintenance, by promoting cell cycle recovery from replication arrest and limiting single-stranded DNA amount in response to replication stress, thus reducing the breakdown of stalled replication forks and avoiding DNA damage. In addition, probable function in DNA repair of isoform 2 via interaction with KU70/XRCC6. Promotes cardiac myocyte enlargement. RPB1/POLR2A phosphorylation on 'Ser-2' in CTD activates transcription. AR phosphorylation modulates AR transcription factor promoter selectivity and cell growth. DSIF and NELF phosphorylation promotes transcription by inhibiting their negative effect. The phosphorylation of MYOD1 enhances its transcriptional activity and thus promotes muscle differentiation. Catalyzes phosphorylation of KAT5, promoting KAT5 recruitment to chromatin and histone acetyltransferase activity. This Mus musculus (Mouse) protein is Cyclin-dependent kinase 9 (Cdk9).